The sequence spans 525 residues: Cytochrome P450 CYP72A613 (525 aa).

Residues 2–22 (VFLFPTGTIIIWVLTILLAVI) traverse the membrane as a helical segment. C473 contributes to the heme binding site.

It belongs to the cytochrome P450 family. As to expression, mainly expressed in leaves and seed pods and, to a lower extent, in flowers and stems.

The protein resides in the membrane. It functions in the pathway steroid metabolism; cholesterol metabolism. Involved in the biosynthesis of spiroketal steroid and saponin natural products from cholesterol such as diosgenin and analogs (e.g. furostanol and spirostanol), plant defense compounds used as main precursors for the industrial production of steroid hormones. During the 5,6-spiroketalization of cholesterol, may catalyze the 27-monohydroxylation of furostanol-type steroid to an intermediate product that undergoes a stereospecific formation of the terminal heterocycle to yield diosgenin. In Trigonella foenum-graecum (Fenugreek), this protein is Cytochrome P450 CYP72A613.